The sequence spans 170 residues: uncharacterized protein (170 aa).

This is an uncharacterized protein from Homo sapiens (Human).